A 182-amino-acid chain; its full sequence is 7-carboxy-7-deazaguanine synthase (182 aa).

Residues 12–14 and R27 each bind substrate; that span reads LQG. The 165-residue stretch at 18–182 folds into the Radical SAM core domain; the sequence is HTGTPAVFIR…LQTHKLIDIR (165 aa). [4Fe-4S] cluster contacts are provided by C31, C35, and C38. A Mg(2+)-binding site is contributed by T40. Substrate is bound at residue T68. S-adenosyl-L-methionine-binding positions include G70 and 111–113; that span reads SPK.

Belongs to the radical SAM superfamily. 7-carboxy-7-deazaguanine synthase family. Homodimer. [4Fe-4S] cluster serves as cofactor. Requires S-adenosyl-L-methionine as cofactor. The cofactor is Mg(2+).

The catalysed reaction is 6-carboxy-5,6,7,8-tetrahydropterin + H(+) = 7-carboxy-7-deazaguanine + NH4(+). It participates in purine metabolism; 7-cyano-7-deazaguanine biosynthesis. Its function is as follows. Catalyzes the complex heterocyclic radical-mediated conversion of 6-carboxy-5,6,7,8-tetrahydropterin (CPH4) to 7-carboxy-7-deazaguanine (CDG), a step common to the biosynthetic pathways of all 7-deazapurine-containing compounds. This chain is 7-carboxy-7-deazaguanine synthase, found in Bacteroides thetaiotaomicron (strain ATCC 29148 / DSM 2079 / JCM 5827 / CCUG 10774 / NCTC 10582 / VPI-5482 / E50).